Here is a 391-residue protein sequence, read N- to C-terminus: Na(+)/H(+) antiporter NhaA 2 (391 aa).

Transmembrane regions (helical) follow at residues 25 to 45, 56 to 76, 98 to 118, 128 to 148, 157 to 177, 180 to 200, 208 to 228, 264 to 284, 297 to 317, 335 to 355, and 364 to 384; these read AGGI…NSPL, VWLG…IFFL, ALPG…YIAI, GWAI…SLLG, VFLA…IAFF, SGLN…LVAL, LLPY…SGVH, VAFA…LSGI, VALG…VLAI, GVAI…NLAF, and EVKV…IVLL.

Belongs to the NhaA Na(+)/H(+) (TC 2.A.33) antiporter family.

It is found in the cell inner membrane. It carries out the reaction Na(+)(in) + 2 H(+)(out) = Na(+)(out) + 2 H(+)(in). Its function is as follows. Na(+)/H(+) antiporter that extrudes sodium in exchange for external protons. This Pseudomonas syringae pv. tomato (strain ATCC BAA-871 / DC3000) protein is Na(+)/H(+) antiporter NhaA 2.